The sequence spans 585 residues: Arginine--tRNA ligase (585 aa).

A 'HIGH' region motif is present at residues A131–H141.

This sequence belongs to the class-I aminoacyl-tRNA synthetase family. In terms of assembly, monomer.

The protein resides in the cytoplasm. The enzyme catalyses tRNA(Arg) + L-arginine + ATP = L-arginyl-tRNA(Arg) + AMP + diphosphate. The polypeptide is Arginine--tRNA ligase (Bartonella tribocorum (strain CIP 105476 / IBS 506)).